Here is a 294-residue protein sequence, read N- to C-terminus: Protoheme IX farnesyltransferase (294 aa).

A run of 9 helical transmembrane segments spans residues 24 to 44 (VVLL…PGWV), 48 to 68 (LIAF…AINH), 96 to 116 (ALWF…LFVN), 118 to 138 (LTAL…TGYL), 145 to 165 (NIVI…TAVT), 172 to 192 (ALLL…ALAI), 224 to 244 (VLLL…WIYL), 245 to 265 (LGAL…YFTD), and 268 to 288 (VVAM…FVFL).

The protein belongs to the UbiA prenyltransferase family. Protoheme IX farnesyltransferase subfamily.

It localises to the cell inner membrane. The enzyme catalyses heme b + (2E,6E)-farnesyl diphosphate + H2O = Fe(II)-heme o + diphosphate. It functions in the pathway porphyrin-containing compound metabolism; heme O biosynthesis; heme O from protoheme: step 1/1. Converts heme B (protoheme IX) to heme O by substitution of the vinyl group on carbon 2 of heme B porphyrin ring with a hydroxyethyl farnesyl side group. The protein is Protoheme IX farnesyltransferase of Legionella pneumophila (strain Corby).